A 485-amino-acid chain; its full sequence is Cobyric acid synthase (485 aa).

The region spanning Arg250–Leu436 is the GATase cobBQ-type domain. Cys332 (nucleophile) is an active-site residue. His428 is an active-site residue.

The protein belongs to the CobB/CobQ family. CobQ subfamily.

The protein operates within cofactor biosynthesis; adenosylcobalamin biosynthesis. Catalyzes amidations at positions B, D, E, and G on adenosylcobyrinic A,C-diamide. NH(2) groups are provided by glutamine, and one molecule of ATP is hydrogenolyzed for each amidation. This chain is Cobyric acid synthase, found in Rhizorhabdus wittichii (strain DSM 6014 / CCUG 31198 / JCM 15750 / NBRC 105917 / EY 4224 / RW1) (Sphingomonas wittichii).